The sequence spans 319 residues: Class I histocompatibility antigen, Non-RT1.A alpha-1 chain (319 aa).

The N-terminal stretch at 1-24 is a signal peptide; sequence MGAMAPRTLLLLLAAVLAPTQTWA. Residues 25–114 form an alpha-1 region; sequence GSHSLRYFHT…LLSYYNQSEG (90 aa). At 25 to 307 the chain is on the extracellular side; it reads GSHSLRYFHT…WEPSPSTDSN (283 aa). Asn110 is a glycosylation site (N-linked (GlcNAc...) asparagine). The interval 115 to 206 is alpha-2; that stretch reads GSHTIQRMYG…ERGKETLLRS (92 aa). 2 disulfides stabilise this stretch: Cys125/Cys188 and Cys227/Cys283. The alpha-3 stretch occupies residues 207–298; that stretch reads DPPEAHVTLH…GLPEPLSQRW (92 aa). Residues 209-295 enclose the Ig-like C1-type domain; it reads PEAHVTLHPR…EHEGLPEPLS (87 aa). Asn280 is a glycosylation site (N-linked (GlcNAc...) asparagine). Residues 299–307 are connecting peptide; the sequence is EPSPSTDSN. Residues 308 to 319 traverse the membrane as a helical segment; sequence LLLLFLELWQFL.

Belongs to the MHC class I family. Heterodimer of an alpha chain and a beta chain (beta-2-microglobulin).

The protein localises to the membrane. Functionally, involved in the presentation of foreign antigens to the immune system. This chain is Class I histocompatibility antigen, Non-RT1.A alpha-1 chain (RT1-Aw2), found in Rattus norvegicus (Rat).